A 346-amino-acid polypeptide reads, in one-letter code: Peripherin-2 (346 aa).

Residues 1 to 24 are Cytoplasmic-facing; that stretch reads MALLKVKFDQKKRVKLAQGLWLMN. The chain crosses the membrane as a helical span at residues 25-43; that stretch reads WLSVLAGIVLFSLGLFLKI. Topologically, residues 44–61 are lumenal; that stretch reads ELRKRSEVMNNSESHFVP. N-linked (GlcNAc...) asparagine glycosylation is present at N53. The chain crosses the membrane as a helical span at residues 62–80; it reads NSLIGVGVLSCVFNSLAGK. Over 81–99 the chain is Cytoplasmic; sequence ICYDALDPAKYAKWKPWLK. A helical transmembrane segment spans residues 100–123; the sequence is PYLAVCIFFNVILFLVALCCFLLR. Residues 124–264 lie on the Lumenal side of the membrane; it reads GSLESTLAYG…LNYYSSLMNS (141 aa). An N-linked (GlcNAc...) asparagine glycan is attached at N229. The chain crosses the membrane as a helical span at residues 265 to 290; the sequence is MGVVTLLVWLFEVSITAGLRYLHTAL. Over 291–346 the chain is Cytoplasmic; that stretch reads ESVSNPEDPECESEGWLLEKSVPETWKAFLESFKKLGKSNQVEAEGADAGPAPEAG. The interval 341 to 346 is interaction with MREG; the sequence is PAPEAG.

This sequence belongs to the PRPH2/ROM1 family. In terms of assembly, homodimer; disulfide-linked. Forms a homotetramer. Forms a heterotetramer with ROM1. Homotetramer and heterotetramer core complexes go on to form higher order complexes by formation of intermolecular disulfide bonds. Interacts with MREG. Interacts with STX3 isoform 3B. Interacts with SNAP25. In terms of tissue distribution, expressed in the retina (at protein level).

It localises to the membrane. The protein localises to the cell projection. It is found in the cilium. Its subcellular location is the photoreceptor outer segment. The protein resides in the photoreceptor inner segment. Its function is as follows. Essential for retina photoreceptor outer segment disk morphogenesis, may also play a role with ROM1 in the maintenance of outer segment disk structure. Required for the maintenance of retinal outer nuclear layer thickness. Required for the correct development and organization of the photoreceptor inner segment. The sequence is that of Peripherin-2 (Prph2) from Mus musculus (Mouse).